The chain runs to 153 residues: Ribosomal RNA large subunit methyltransferase H (153 aa).

S-adenosyl-L-methionine contacts are provided by residues Leu70, Gly102, and 121–126 (LSRMTF).

The protein belongs to the RNA methyltransferase RlmH family. In terms of assembly, homodimer.

Its subcellular location is the cytoplasm. It catalyses the reaction pseudouridine(1915) in 23S rRNA + S-adenosyl-L-methionine = N(3)-methylpseudouridine(1915) in 23S rRNA + S-adenosyl-L-homocysteine + H(+). In terms of biological role, specifically methylates the pseudouridine at position 1915 (m3Psi1915) in 23S rRNA. The chain is Ribosomal RNA large subunit methyltransferase H from Geotalea daltonii (strain DSM 22248 / JCM 15807 / FRC-32) (Geobacter daltonii).